The sequence spans 598 residues: Urease subunit alpha (598 aa).

Positions 136-598 constitute a Urease domain; the sequence is GGLDTHVHWL…APLAQRYFLF (463 aa). Ni(2+) is bound by residues H141, H143, and K223. Residue K223 is modified to N6-carboxylysine. Substrate is bound at residue H225. Ni(2+)-binding residues include H252 and H278. The active-site Proton donor is H326. Ni(2+) is bound at residue D366.

Belongs to the metallo-dependent hydrolases superfamily. Urease alpha subunit family. Heterotrimer of UreA (gamma), UreB (beta) and UreC (alpha) subunits. Three heterotrimers associate to form the active enzyme. Requires Ni cation as cofactor. Post-translationally, carboxylation allows a single lysine to coordinate two nickel ions.

The protein localises to the cytoplasm. It carries out the reaction urea + 2 H2O + H(+) = hydrogencarbonate + 2 NH4(+). The protein operates within nitrogen metabolism; urea degradation; CO(2) and NH(3) from urea (urease route): step 1/1. This chain is Urease subunit alpha, found in Ureaplasma urealyticum serovar 10 (strain ATCC 33699 / Western).